The sequence spans 294 residues: MADKLIKATAKDGQVRIIGAITTELVNKGIEVHKCSPTGAAALGRMLTAGSLMGSMLKSEKDTITIKIDGGGEAKGVLVTAYPEGKVKGYIGNPLVHLPLNQNGKLDVGGAIGKNGNITVIKDLGLKDPYIGQVPIYSGEIGDDLAYYFTVSEQTPSAVGLGVLVDKDLSIKASGGFIIQMMPGADELLADFITYRLEEIPSITELISKGMSIEEILEFIFEGMDLKILEGIVPEYTCDCSREKIDRALISIGYKDLKEIYDEGKTEELVCQFCNEKYFYDHEKIGELLRIMNN.

2 disulfide bridges follow: Cys238/Cys240 and Cys271/Cys274.

Belongs to the HSP33 family. Under oxidizing conditions two disulfide bonds are formed involving the reactive cysteines. Under reducing conditions zinc is bound to the reactive cysteines and the protein is inactive.

The protein resides in the cytoplasm. Functionally, redox regulated molecular chaperone. Protects both thermally unfolding and oxidatively damaged proteins from irreversible aggregation. Plays an important role in the bacterial defense system toward oxidative stress. This chain is 33 kDa chaperonin, found in Clostridium tetani (strain Massachusetts / E88).